The following is a 209-amino-acid chain: Leucyl/phenylalanyl-tRNA--protein transferase (209 aa).

It belongs to the L/F-transferase family.

It localises to the cytoplasm. It carries out the reaction N-terminal L-lysyl-[protein] + L-leucyl-tRNA(Leu) = N-terminal L-leucyl-L-lysyl-[protein] + tRNA(Leu) + H(+). The catalysed reaction is N-terminal L-arginyl-[protein] + L-leucyl-tRNA(Leu) = N-terminal L-leucyl-L-arginyl-[protein] + tRNA(Leu) + H(+). The enzyme catalyses L-phenylalanyl-tRNA(Phe) + an N-terminal L-alpha-aminoacyl-[protein] = an N-terminal L-phenylalanyl-L-alpha-aminoacyl-[protein] + tRNA(Phe). Its function is as follows. Functions in the N-end rule pathway of protein degradation where it conjugates Leu, Phe and, less efficiently, Met from aminoacyl-tRNAs to the N-termini of proteins containing an N-terminal arginine or lysine. In Paramagnetospirillum magneticum (strain ATCC 700264 / AMB-1) (Magnetospirillum magneticum), this protein is Leucyl/phenylalanyl-tRNA--protein transferase.